A 499-amino-acid chain; its full sequence is Tetrathionate hydrolase (499 aa).

A signal peptide spans 1-32 (MPSIVRNHGPHNKILLSALLLALFGWVPLASA).

It belongs to the tetrathionate hydrolase family. In terms of assembly, homodimer.

It localises to the cell membrane. The catalysed reaction is tetrathionate + H2O = sulfur + thiosulfate + sulfate + H(+). Catalyzes the hydrolysis of tetrathionate to generate elemental sulfur, thiosulfate and sulfate. This is Tetrathionate hydrolase from Acidithiobacillus ferrooxidans (strain ATCC 23270 / DSM 14882 / CIP 104768 / NCIMB 8455) (Ferrobacillus ferrooxidans (strain ATCC 23270)).